A 412-amino-acid chain; its full sequence is Peptidase T (412 aa).

Residue His-84 coordinates Zn(2+). Asp-86 is a catalytic residue. Asp-146 is a Zn(2+) binding site. Glu-179 functions as the Proton acceptor in the catalytic mechanism. Residues Glu-180, Asp-202, and His-385 each contribute to the Zn(2+) site.

Belongs to the peptidase M20B family. The cofactor is Zn(2+).

The protein localises to the cytoplasm. The enzyme catalyses Release of the N-terminal residue from a tripeptide.. Cleaves the N-terminal amino acid of tripeptides. This chain is Peptidase T, found in Haemophilus influenzae (strain 86-028NP).